Consider the following 278-residue polypeptide: Large ribosomal subunit protein uL2 (278 aa).

Disordered regions lie at residues 1 to 59 and 222 to 278; these read MAIR…GGHK and RGAA…NKKR. The segment covering 16–27 has biased composition (polar residues); sequence SSVSEFSEITRS. Composition is skewed to basic residues over residues 45–59 and 269–278; these read VHGH…GGHK and VRRRRPNKKR.

The protein belongs to the universal ribosomal protein uL2 family. As to quaternary structure, part of the 50S ribosomal subunit. Forms a bridge to the 30S subunit in the 70S ribosome.

Its function is as follows. One of the primary rRNA binding proteins. Required for association of the 30S and 50S subunits to form the 70S ribosome, for tRNA binding and peptide bond formation. It has been suggested to have peptidyltransferase activity; this is somewhat controversial. Makes several contacts with the 16S rRNA in the 70S ribosome. This Corynebacterium urealyticum (strain ATCC 43042 / DSM 7109) protein is Large ribosomal subunit protein uL2.